We begin with the raw amino-acid sequence, 171 residues long: MLKLLGAVFIVVATTWTGFEMAKIYTERPRQIRQLRAALQSLEAEIMYGHTPLHTASQQIAKQLAQPVSTLFSAFSDQLDKGSDSAKTAWEQSLKKVWDTLSLKKSEYEVLKQFGETLGIHDRISQQKHIKLALTHLEASEADAEQAQAKNEKMIKSLGFLAGLLLILLLM.

This chain is Stage III sporulation protein AB (spoIIIAB), found in Bacillus subtilis (strain 168).